The sequence spans 89 residues: Long neurotoxin homolog TA-bm16 (89 aa).

The signal sequence occupies residues 1 to 21 (MKTLLLTLVVVTIVCLDLGYT). Cystine bridges form between C24/C45, C27/C32, C38/C66, C70/C81, and C82/C87.

This sequence belongs to the three-finger toxin family. Ancestral subfamily. Orphan group V sub-subfamily. As to expression, expressed by the venom gland.

The protein resides in the secreted. Exhibits M2 muscarinic acetylcholine receptor (CHRM2)-blocking activity, but has a weak binding activity toward nicotinic AChR. Moreover, it inhibits collagen-induced platelet aggregation. In Bungarus multicinctus (Many-banded krait), this protein is Long neurotoxin homolog TA-bm16.